The chain runs to 199 residues: Large ribosomal subunit protein uL10 (199 aa).

Belongs to the universal ribosomal protein uL10 family. As to quaternary structure, part of the ribosomal stalk of the 50S ribosomal subunit. The N-terminus interacts with L11 and the large rRNA to form the base of the stalk. The C-terminus forms an elongated spine to which L12 dimers bind in a sequential fashion forming a multimeric L10(L12)X complex.

Its function is as follows. Forms part of the ribosomal stalk, playing a central role in the interaction of the ribosome with GTP-bound translation factors. In Aquifex aeolicus (strain VF5), this protein is Large ribosomal subunit protein uL10 (rplJ).